The following is a 449-amino-acid chain: Xylose isomerase (449 aa).

Catalysis depends on residues His101 and Asp104. Mg(2+) contacts are provided by Glu232, Glu268, His271, Asp296, Asp307, Asp309, and Asp340.

Belongs to the xylose isomerase family. As to quaternary structure, homotetramer. It depends on Mg(2+) as a cofactor.

It localises to the cytoplasm. It catalyses the reaction alpha-D-xylose = alpha-D-xylulofuranose. The protein is Xylose isomerase of Bifidobacterium longum (strain DJO10A).